The sequence spans 322 residues: Acetyl-coenzyme A carboxylase carboxyl transferase subunit alpha (322 aa).

One can recognise a CoA carboxyltransferase C-terminal domain in the interval 32-293; it reads DISEEIARLE…KRALQDALRQ (262 aa).

It belongs to the AccA family. As to quaternary structure, acetyl-CoA carboxylase is a heterohexamer composed of biotin carboxyl carrier protein (AccB), biotin carboxylase (AccC) and two subunits each of ACCase subunit alpha (AccA) and ACCase subunit beta (AccD).

The protein resides in the cytoplasm. The enzyme catalyses N(6)-carboxybiotinyl-L-lysyl-[protein] + acetyl-CoA = N(6)-biotinyl-L-lysyl-[protein] + malonyl-CoA. It functions in the pathway lipid metabolism; malonyl-CoA biosynthesis; malonyl-CoA from acetyl-CoA: step 1/1. Functionally, component of the acetyl coenzyme A carboxylase (ACC) complex. First, biotin carboxylase catalyzes the carboxylation of biotin on its carrier protein (BCCP) and then the CO(2) group is transferred by the carboxyltransferase to acetyl-CoA to form malonyl-CoA. The chain is Acetyl-coenzyme A carboxylase carboxyl transferase subunit alpha from Aromatoleum aromaticum (strain DSM 19018 / LMG 30748 / EbN1) (Azoarcus sp. (strain EbN1)).